A 379-amino-acid chain; its full sequence is Chaperone protein DnaJ (379 aa).

In terms of domain architecture, J spans 5–70 (DYYEVLGVGK…EKKAAYDQYG (66 aa)). The CR-type zinc-finger motif lies at 139–217 (GHEAQIRVPH…CHGQGKLKSQ (79 aa)). Zn(2+) is bound by residues C152, C155, C169, C172, C191, C194, C205, and C208. CXXCXGXG motif repeat units follow at residues 152–159 (CEHCHGNG), 169–176 (CPTCNGVG), 191–198 (CPKCHGSG), and 205–212 (CTKCHGQG).

Belongs to the DnaJ family. Homodimer. Zn(2+) serves as cofactor.

It localises to the cytoplasm. Functionally, participates actively in the response to hyperosmotic and heat shock by preventing the aggregation of stress-denatured proteins and by disaggregating proteins, also in an autonomous, DnaK-independent fashion. Unfolded proteins bind initially to DnaJ; upon interaction with the DnaJ-bound protein, DnaK hydrolyzes its bound ATP, resulting in the formation of a stable complex. GrpE releases ADP from DnaK; ATP binding to DnaK triggers the release of the substrate protein, thus completing the reaction cycle. Several rounds of ATP-dependent interactions between DnaJ, DnaK and GrpE are required for fully efficient folding. Also involved, together with DnaK and GrpE, in the DNA replication of plasmids through activation of initiation proteins. The polypeptide is Chaperone protein DnaJ (Cupriavidus metallidurans (strain ATCC 43123 / DSM 2839 / NBRC 102507 / CH34) (Ralstonia metallidurans)).